The following is a 315-amino-acid chain: MINADKPHRWNDDVQASVRLYNQWFLDAAPKAYRDTRQLTIDEVEQAFQRTANMTSITPEVLKAHPKTLATLRMSTAPPIARDRLVGLSHGSKSLLDTMEKGKLPPRMKGDVLDTHLAKMCAVLTDLLDLDLFHWYPTGEPAEPRQRELAATVVADRLCGAIADPIVRNAQERRQLALIEEWLLARGYTKKTHSASLPLNTMQPGTFSFRQNVVVGSDLPVNIPVDAVIQPHTPHSHKLPILIEAKSAGDFTNTNKRRKEEATKIHQLQLKYGNEISLTLFLCGYFNTGYLGYSAAEGLDWVWEHRIDDLEAAGA.

The enzyme catalyses Endonucleolytic cleavage of DNA to give specific double-stranded fragments with terminal 5'-phosphates.. In terms of biological role, a P subtype restriction enzyme that recognizes the double-stranded sequence 5'-GTCGAC-3' and cleaves after G-1. This is Type II restriction enzyme SalI from Streptomyces albus G.